Here is a 66-residue protein sequence, read N- to C-terminus: Large ribosomal subunit protein bL31 (66 aa).

Zn(2+) is bound by residues Cys-16, Cys-18, Cys-36, and Cys-39.

It belongs to the bacterial ribosomal protein bL31 family. Type A subfamily. As to quaternary structure, part of the 50S ribosomal subunit. Zn(2+) is required as a cofactor.

In terms of biological role, binds the 23S rRNA. The polypeptide is Large ribosomal subunit protein bL31 (Clostridioides difficile (strain 630) (Peptoclostridium difficile)).